Reading from the N-terminus, the 306-residue chain is Putative lipid kinase Sca_1050 (306 aa).

The region spanning 3-139 (QHFHRGILFY…FDVLKVNDTY (137 aa)) is the DAGKc domain. ATP-binding positions include S44, 74-80 (GDGTVNE), and T101. Mg(2+) is bound by residues S220, D223, and E225. The active-site Proton acceptor is the E281.

Belongs to the diacylglycerol/lipid kinase family. Mg(2+) is required as a cofactor.

May catalyze the ATP-dependent phosphorylation of lipids other than diacylglycerol (DAG). The chain is Putative lipid kinase Sca_1050 from Staphylococcus carnosus (strain TM300).